Reading from the N-terminus, the 141-residue chain is 6,7-dimethyl-8-ribityllumazine synthase (141 aa).

Residues F14, 46 to 48 (VFD), and 70 to 72 (CVI) contribute to the 5-amino-6-(D-ribitylamino)uracil site. A (2S)-2-hydroxy-3-oxobutyl phosphate-binding site is contributed by 75-76 (ET). H78 functions as the Proton donor in the catalytic mechanism. L103 contributes to the 5-amino-6-(D-ribitylamino)uracil binding site. Residue R118 participates in (2S)-2-hydroxy-3-oxobutyl phosphate binding.

As to quaternary structure, forms an icosahedral capsid composed of 60 subunits, arranged as a dodecamer of pentamers.

The enzyme catalyses (2S)-2-hydroxy-3-oxobutyl phosphate + 5-amino-6-(D-ribitylamino)uracil = 6,7-dimethyl-8-(1-D-ribityl)lumazine + phosphate + 2 H2O + H(+). It functions in the pathway cofactor biosynthesis; riboflavin biosynthesis; riboflavin from 2-hydroxy-3-oxobutyl phosphate and 5-amino-6-(D-ribitylamino)uracil: step 1/2. In terms of biological role, catalyzes the formation of 6,7-dimethyl-8-ribityllumazine by condensation of 5-amino-6-(D-ribitylamino)uracil with 3,4-dihydroxy-2-butanone 4-phosphate. This is the penultimate step in the biosynthesis of riboflavin. The polypeptide is 6,7-dimethyl-8-ribityllumazine synthase (ribH) (Methanocaldococcus jannaschii (strain ATCC 43067 / DSM 2661 / JAL-1 / JCM 10045 / NBRC 100440) (Methanococcus jannaschii)).